The sequence spans 434 residues: MARTDIARRVYNHTWKLDPIVRSLLDTDFYKLLMLQMIWGMYPKVDATFSLINRTTSVRLADEIDEGELREQLDHARTLRFSKKEMIWLGGNNFYGRKQIFEPEFLAWLEGFRLPDYELSKRDGQYELSFSGPWMYTTLWEIPALAIINELRSRAAMRAFGPFALDVLYARAKAKMWAKTERLKALPGIRISDFGTRRRHSFLWQRWCVEALKEGIGEAFTGTSNVLLAMDNDLEALGTNAHELPMVFAALANSEKELKQAPYKVLQDWQRYYGGNLLIVLPDAFGTASFLRDAPDWVADWTGFRPDSAPPIEGGEKILSWWRERGKDPKQKLLIFSDGLEVETIEETYRHFKGKVRMSFGWGTNLTNDFEGCAPTETNSLDAISLVCKVTEANGRPAVKLSDNPAKATGDEKEIERYLRIFGEKDRVEQLVKV.

At His-242 the chain carries Phosphohistidine; by autocatalysis.

Belongs to the NAPRTase family. Transiently phosphorylated on a His residue during the reaction cycle. Phosphorylation strongly increases the affinity for substrates and increases the rate of nicotinate D-ribonucleotide production. Dephosphorylation regenerates the low-affinity form of the enzyme, leading to product release.

It catalyses the reaction nicotinate + 5-phospho-alpha-D-ribose 1-diphosphate + ATP + H2O = nicotinate beta-D-ribonucleotide + ADP + phosphate + diphosphate. It participates in cofactor biosynthesis; NAD(+) biosynthesis; nicotinate D-ribonucleotide from nicotinate: step 1/1. Its function is as follows. Catalyzes the synthesis of beta-nicotinate D-ribonucleotide from nicotinate and 5-phospho-D-ribose 1-phosphate at the expense of ATP. In Mesorhizobium japonicum (strain LMG 29417 / CECT 9101 / MAFF 303099) (Mesorhizobium loti (strain MAFF 303099)), this protein is Nicotinate phosphoribosyltransferase.